The following is a 148-amino-acid chain: Nucleoside diphosphate kinase 1 (148 aa).

ATP contacts are provided by Lys9, Phe57, Arg85, Thr91, Arg102, and Asn112. His115 acts as the Pros-phosphohistidine intermediate in catalysis.

This sequence belongs to the NDK family. The cofactor is Mg(2+).

It carries out the reaction a 2'-deoxyribonucleoside 5'-diphosphate + ATP = a 2'-deoxyribonucleoside 5'-triphosphate + ADP. The catalysed reaction is a ribonucleoside 5'-diphosphate + ATP = a ribonucleoside 5'-triphosphate + ADP. Functionally, major role in the synthesis of nucleoside triphosphates other than ATP. The ATP gamma phosphate is transferred to the NDP beta phosphate via a ping-pong mechanism, using a phosphorylated active-site intermediate. This Mesembryanthemum crystallinum (Common ice plant) protein is Nucleoside diphosphate kinase 1 (NDKP1).